The following is a 209-amino-acid chain: Chloramphenicol acetyltransferase (209 aa).

The active site involves histidine 78.

This sequence belongs to the transferase hexapeptide repeat family.

The catalysed reaction is chloramphenicol + acetyl-CoA = chloramphenicol 3-acetate + CoA. In terms of biological role, this enzyme is an effector of chloramphenicol resistance in bacteria. This Agrobacterium fabrum (strain C58 / ATCC 33970) (Agrobacterium tumefaciens (strain C58)) protein is Chloramphenicol acetyltransferase (cat).